Consider the following 427-residue polypeptide: Enolase (427 aa).

A (2R)-2-phosphoglycerate-binding site is contributed by Q163. E205 serves as the catalytic Proton donor. D242, E285, and D312 together coordinate Mg(2+). Positions 337, 366, 367, and 388 each coordinate (2R)-2-phosphoglycerate. Catalysis depends on K337, which acts as the Proton acceptor.

Belongs to the enolase family. The cofactor is Mg(2+).

It localises to the cytoplasm. It is found in the secreted. The protein localises to the cell surface. It catalyses the reaction (2R)-2-phosphoglycerate = phosphoenolpyruvate + H2O. It participates in carbohydrate degradation; glycolysis; pyruvate from D-glyceraldehyde 3-phosphate: step 4/5. In terms of biological role, catalyzes the reversible conversion of 2-phosphoglycerate (2-PG) into phosphoenolpyruvate (PEP). It is essential for the degradation of carbohydrates via glycolysis. In Dechloromonas aromatica (strain RCB), this protein is Enolase.